A 555-amino-acid polypeptide reads, in one-letter code: CTP synthase (555 aa).

An amidoligase domain region spans residues 1–265 (MTRYIFITGG…GNRVCEKLNI (265 aa)). Ser-13 contacts CTP. UTP is bound at residue Ser-13. Residues 14 to 19 (SLGKGI) and Asp-71 each bind ATP. Residues Asp-71 and Glu-139 each coordinate Mg(2+). CTP-binding positions include 146 to 148 (DIE), 186 to 191 (KTKPTQ), and Lys-222. UTP-binding positions include 186–191 (KTKPTQ) and Lys-222. In terms of domain architecture, Glutamine amidotransferase type-1 spans 290–541 (TVAVVGKYVD…IKAGLAAKEA (252 aa)). Residue Gly-351 coordinates L-glutamine. Catalysis depends on Cys-378, which acts as the Nucleophile; for glutamine hydrolysis. L-glutamine-binding positions include 379 to 382 (LGMQ), Glu-402, and Arg-469. Active-site residues include His-514 and Glu-516.

Belongs to the CTP synthase family. In terms of assembly, homotetramer.

It carries out the reaction UTP + L-glutamine + ATP + H2O = CTP + L-glutamate + ADP + phosphate + 2 H(+). The catalysed reaction is L-glutamine + H2O = L-glutamate + NH4(+). The enzyme catalyses UTP + NH4(+) + ATP = CTP + ADP + phosphate + 2 H(+). It functions in the pathway pyrimidine metabolism; CTP biosynthesis via de novo pathway; CTP from UDP: step 2/2. Its activity is regulated as follows. Allosterically activated by GTP, when glutamine is the substrate; GTP has no effect on the reaction when ammonia is the substrate. The allosteric effector GTP functions by stabilizing the protein conformation that binds the tetrahedral intermediate(s) formed during glutamine hydrolysis. Inhibited by the product CTP, via allosteric rather than competitive inhibition. Its function is as follows. Catalyzes the ATP-dependent amination of UTP to CTP with either L-glutamine or ammonia as the source of nitrogen. Regulates intracellular CTP levels through interactions with the four ribonucleotide triphosphates. The chain is CTP synthase from Coxiella burnetii (strain RSA 331 / Henzerling II).